Consider the following 363-residue polypeptide: Probable protein phosphatase 2C member 13, mitochondrial (363 aa).

Residues 1–59 (MVCFASLRRALPLLLRATTTTTPRFLLPRALSGGVGGGAAVDARALLRGHSGWRGLRVA) constitute a mitochondrion transit peptide. A PPM-type phosphatase domain is found at 111-357 (KCGYSSFRGK…DNITCIVVQF (247 aa)). The Mn(2+) site is built by aspartate 147, glycine 148, aspartate 309, and aspartate 348.

This sequence belongs to the PP2C family. Requires Mg(2+) as cofactor. The cofactor is Mn(2+). Highly expressed in mature pollen grains.

It is found in the mitochondrion. The catalysed reaction is O-phospho-L-seryl-[protein] + H2O = L-seryl-[protein] + phosphate. The enzyme catalyses O-phospho-L-threonyl-[protein] + H2O = L-threonyl-[protein] + phosphate. Probable protein phosphatase that may play a role as a mitochondrial signal transduction mediator in pollen germination. May function in retrograde signaling from the mitochondria to the nucleus. May be a downstream factor of cytoplasmic male sterility (CMS). CMS is caused by genetic incompatibility between nuclei and mitochondria within male reproductive organs. In Oryza sativa subsp. japonica (Rice), this protein is Probable protein phosphatase 2C member 13, mitochondrial.